Consider the following 292-residue polypeptide: Mycothiol acetyltransferase (292 aa).

2 consecutive N-acetyltransferase domains span residues 13–168 (ALDR…KWLQ) and 159–292 (KSVA…VYEK). 1D-myo-inositol 2-(L-cysteinylamino)-2-deoxy-alpha-D-glucopyranoside is bound at residue Glu-40. Acetyl-CoA is bound at residue 77-79 (LAV). 1D-myo-inositol 2-(L-cysteinylamino)-2-deoxy-alpha-D-glucopyranoside-binding residues include Glu-179, Lys-218, and Glu-226. Residues 230–232 (VGL) and 237–243 (RGRGLGD) each bind acetyl-CoA. Residue Tyr-264 participates in 1D-myo-inositol 2-(L-cysteinylamino)-2-deoxy-alpha-D-glucopyranoside binding.

It belongs to the acetyltransferase family. MshD subfamily. As to quaternary structure, monomer.

The catalysed reaction is 1D-myo-inositol 2-(L-cysteinylamino)-2-deoxy-alpha-D-glucopyranoside + acetyl-CoA = mycothiol + CoA + H(+). In terms of biological role, catalyzes the transfer of acetyl from acetyl-CoA to desacetylmycothiol (Cys-GlcN-Ins) to form mycothiol. The sequence is that of Mycothiol acetyltransferase from Corynebacterium glutamicum (strain ATCC 13032 / DSM 20300 / JCM 1318 / BCRC 11384 / CCUG 27702 / LMG 3730 / NBRC 12168 / NCIMB 10025 / NRRL B-2784 / 534).